An 81-amino-acid polypeptide reads, in one-letter code: uncharacterized protein (81 aa).

The SpoVT-AbrB domain maps to 1-45 (MRTTIDVAGRLVIPKRIRERLGLRGNDQVEITERDGRIEIEPAPT).

To B.subtilis SpoVT.

This is an uncharacterized protein from Mycobacterium bovis (strain ATCC BAA-935 / AF2122/97).